A 264-amino-acid chain; its full sequence is Thymidylate synthase (264 aa).

Residues Arg21 and 126-127 contribute to the dUMP site; that span reads RR. Cys146 serves as the catalytic Nucleophile. Residues 166-169, Asn177, and 207-209 contribute to the dUMP site; these read RSAD and HLY. Asp169 serves as a coordination point for (6R)-5,10-methylene-5,6,7,8-tetrahydrofolate. Residue Ala263 coordinates (6R)-5,10-methylene-5,6,7,8-tetrahydrofolate.

This sequence belongs to the thymidylate synthase family. Bacterial-type ThyA subfamily. Homodimer.

It is found in the cytoplasm. The enzyme catalyses dUMP + (6R)-5,10-methylene-5,6,7,8-tetrahydrofolate = 7,8-dihydrofolate + dTMP. The protein operates within pyrimidine metabolism; dTTP biosynthesis. In terms of biological role, catalyzes the reductive methylation of 2'-deoxyuridine-5'-monophosphate (dUMP) to 2'-deoxythymidine-5'-monophosphate (dTMP) while utilizing 5,10-methylenetetrahydrofolate (mTHF) as the methyl donor and reductant in the reaction, yielding dihydrofolate (DHF) as a by-product. This enzymatic reaction provides an intracellular de novo source of dTMP, an essential precursor for DNA biosynthesis. In Nitrobacter hamburgensis (strain DSM 10229 / NCIMB 13809 / X14), this protein is Thymidylate synthase.